Here is a 171-residue protein sequence, read N- to C-terminus: NADH-ubiquinone oxidoreductase chain 6 (171 aa).

5 consecutive transmembrane segments (helical) span residues Met1–Lys21, Ile25–Gly44, Phe49–Ala71, Val85–Met105, and Trp150–Ile170.

It belongs to the complex I subunit 6 family. In terms of assembly, core subunit of respiratory chain NADH dehydrogenase (Complex I) which is composed of 45 different subunits.

It localises to the mitochondrion inner membrane. The enzyme catalyses a ubiquinone + NADH + 5 H(+)(in) = a ubiquinol + NAD(+) + 4 H(+)(out). Core subunit of the mitochondrial membrane respiratory chain NADH dehydrogenase (Complex I) which catalyzes electron transfer from NADH through the respiratory chain, using ubiquinone as an electron acceptor. Essential for the catalytic activity and assembly of complex I. This chain is NADH-ubiquinone oxidoreductase chain 6 (MT-ND6), found in Lemur catta (Ring-tailed lemur).